A 588-amino-acid chain; its full sequence is Adenine deaminase (588 aa).

It belongs to the metallo-dependent hydrolases superfamily. Adenine deaminase family. Homodimer. The cofactor is Mn(2+).

The catalysed reaction is adenine + H2O + H(+) = hypoxanthine + NH4(+). This Escherichia coli O139:H28 (strain E24377A / ETEC) protein is Adenine deaminase.